Reading from the N-terminus, the 923-residue chain is Calmodulin-binding transcription activator 5 (923 aa).

The CG-1 DNA-binding region spans 25–151; sequence IQTMLDEAYS…YRETHEVHAA (127 aa). The interval 272–372 is transcription activation; that stretch reads VYQNNNSCGA…HSHSDIPEQV (101 aa). One copy of the ANK repeat lies at 611–640; that stretch reads QGWTALHWAAYYGREKMVAALLSAGARPNL. IQ domains lie at 757 to 786, 799 to 828, and 875 to 904; these read NIIAAMKIQHAFRNFEVRRKIAAAARIQYR, MRKKAIRIQAAFRGFQVRRQYQKITWSVGV, and LERSVVKVQAMFRSKKAQQDYRRMKLAHEE. Positions 824–846 are calmodulin-binding; it reads WSVGVLEKAILRWRLKRKGFRGL. Residues 887–914 are a coiled coil; it reads RSKKAQQDYRRMKLAHEEAQLEYDGMQE.

Belongs to the CAMTA family. Expressed in roots, stems, leaves, pollen, top of sepals and siliques.

The protein resides in the nucleus. Functionally, transcription activator. Binds to the DNA consensus sequence 5'-[ACG]CGCG[GTC]-3'. Regulates transcriptional activity in response to calcium signals. Binds calmodulin in a calcium-dependent manner. Involved in response to cold. Contributes together with CAMTA3 to the positive regulation of the cold-induced expression of DREB1A/CBF3, DREB1B/CBF1 and DREB1C/CBF2. The sequence is that of Calmodulin-binding transcription activator 5 from Arabidopsis thaliana (Mouse-ear cress).